A 416-amino-acid chain; its full sequence is L-threonine dehydratase biosynthetic IlvA (416 aa).

Position 51 is an N6-(pyridoxal phosphate)lysine (Lys51). Residues Asn78, 184-188 (GGGGL), and Ser309 each bind pyridoxal 5'-phosphate. The region spanning 333–407 (HYFVINFPQR…FDNRYVNLHG (75 aa)) is the ACT-like domain.

The protein belongs to the serine/threonine dehydratase family. Homotetramer. Pyridoxal 5'-phosphate is required as a cofactor.

The enzyme catalyses L-threonine = 2-oxobutanoate + NH4(+). It participates in amino-acid biosynthesis; L-isoleucine biosynthesis; 2-oxobutanoate from L-threonine: step 1/1. Functionally, catalyzes the anaerobic formation of alpha-ketobutyrate and ammonia from threonine in a two-step reaction. The first step involved a dehydration of threonine and a production of enamine intermediates (aminocrotonate), which tautomerizes to its imine form (iminobutyrate). Both intermediates are unstable and short-lived. The second step is the nonenzymatic hydrolysis of the enamine/imine intermediates to form 2-ketobutyrate and free ammonia. In the low water environment of the cell, the second step is accelerated by RidA. This is L-threonine dehydratase biosynthetic IlvA (ilvA) from Lactococcus lactis subsp. lactis (strain IL1403) (Streptococcus lactis).